A 199-amino-acid chain; its full sequence is MSSKGPSYRIENIVATVNLGVELDLESLAERLPMAEYNPDQFPGLILRLTKPRISALIFRTGKMVCTGAKNEEDLKNAVRALVKLLNDHGAEVPFDPEVQIQNIVASGNLHAEVDLEQAVFMLENAMYEPEQFPGLIYRMSSPRVVILIFGSGKIVCTGAKSEKDVATAVQKLYNQLKELGVLYIEEGGGEEEEEEEEM.

Tandem repeats lie at residues I10–L86 and I101–L177.

The protein belongs to the TBP family.

In terms of biological role, general factor that plays a role in the activation of archaeal genes transcribed by RNA polymerase. Binds specifically to the TATA box promoter element which lies close to the position of transcription initiation. The chain is TATA-box-binding protein from Pyrobaculum calidifontis (strain DSM 21063 / JCM 11548 / VA1).